A 356-amino-acid polypeptide reads, in one-letter code: DNA polymerase IV (356 aa).

Positions isoleucine 6–glycine 187 constitute a UmuC domain. The Mg(2+) site is built by aspartate 10 and aspartate 105. Residue glutamate 106 is part of the active site.

This sequence belongs to the DNA polymerase type-Y family. In terms of assembly, monomer. It depends on Mg(2+) as a cofactor.

The protein localises to the cytoplasm. It carries out the reaction DNA(n) + a 2'-deoxyribonucleoside 5'-triphosphate = DNA(n+1) + diphosphate. Its function is as follows. Poorly processive, error-prone DNA polymerase involved in untargeted mutagenesis. Copies undamaged DNA at stalled replication forks, which arise in vivo from mismatched or misaligned primer ends. These misaligned primers can be extended by PolIV. Exhibits no 3'-5' exonuclease (proofreading) activity. May be involved in translesional synthesis, in conjunction with the beta clamp from PolIII. The protein is DNA polymerase IV of Staphylococcus aureus (strain JH1).